Here is a 195-residue protein sequence, read N- to C-terminus: O-methyltransferase (195 aa).

Belongs to the methyltransferase superfamily.

The protein operates within secondary metabolite biosynthesis. Functionally, O-methyltransferase; part of the gene cluster that mediates the biosynthesis of pyrophen and campyrone B, which represent a class of fungal amino acid-derived alpha-pyrone natural products. The first step of pyrophen biosynthesis is catalyzed by the PKS-NRPS hybrid synthetase ATPKS that uptakes and condensates L-phenylalanine and malonyl-CoA in order to produce desmethyldesacetylpyrophen. Although the A domain does not discriminate between 2 enantiomeric phenylalanines, the downstream KS domain must play a gate keeping role to stereoselectively accept the L-phenylalanyl-S-phosphopantetheine (Ppant)-T domain intermediate for chain elongation. The resulting amino acid derived diketide is off-loaded through lactonization to yield the alpha-pyrone intermediate desmethyldesacetylpyrophen. The cluster-specific O-methyltransferase (OMT) then methylates desmethyldesacetylpyrophen to desacetylpyrophen, which is further acetylated to pyrophen by an endogenous yet unidentified N-acetyltransferase. ATPKS has relaxed substrate specificity to activate and extend branched-chain amino acid L-leucine to produce small amounts of campyrone B. The polypeptide is O-methyltransferase (Aspergillus niger (strain ATCC 1015 / CBS 113.46 / FGSC A1144 / LSHB Ac4 / NCTC 3858a / NRRL 328 / USDA 3528.7)).